The sequence spans 539 residues: Membrane protein insertase YidC (539 aa).

A helical transmembrane segment spans residues 6 to 26 (NILLIALALVSFLLFQQWNVA). Over residues 35–44 (EQAQSGSTLP) the composition is skewed to polar residues. Residues 35–55 (EQAQSGSTLPAPSYADDLDPA) are disordered. The next 4 helical transmembrane spans lie at 341 to 361 (SFIQ…TFIV), 416 to 436 (LGGC…YWAL), 454 to 474 (LSAQ…MFLI), and 495 to 515 (PVMF…YWLV).

It belongs to the OXA1/ALB3/YidC family. Type 1 subfamily. As to quaternary structure, interacts with the Sec translocase complex via SecD. Specifically interacts with transmembrane segments of nascent integral membrane proteins during membrane integration.

Its subcellular location is the cell inner membrane. Required for the insertion and/or proper folding and/or complex formation of integral membrane proteins into the membrane. Involved in integration of membrane proteins that insert both dependently and independently of the Sec translocase complex, as well as at least some lipoproteins. Aids folding of multispanning membrane proteins. The chain is Membrane protein insertase YidC from Vibrio atlanticus (strain LGP32) (Vibrio splendidus (strain Mel32)).